The chain runs to 277 residues: Phosphonates import ATP-binding protein PhnC 2 (277 aa).

In terms of domain architecture, ABC transporter spans 5-253 (IHVQGLNKTF…FLNDLYGADA (249 aa)). 37–44 (GASGSGKS) is a binding site for ATP.

Belongs to the ABC transporter superfamily. Phosphonates importer (TC 3.A.1.9.1) family. As to quaternary structure, the complex is composed of two ATP-binding proteins (PhnC), two transmembrane proteins (PhnE) and a solute-binding protein (PhnD).

Its subcellular location is the cell inner membrane. The enzyme catalyses phosphonate(out) + ATP + H2O = phosphonate(in) + ADP + phosphate + H(+). Functionally, part of the ABC transporter complex PhnCDE involved in phosphonates import. Responsible for energy coupling to the transport system. The sequence is that of Phosphonates import ATP-binding protein PhnC 2 from Pseudomonas savastanoi pv. phaseolicola (strain 1448A / Race 6) (Pseudomonas syringae pv. phaseolicola (strain 1448A / Race 6)).